A 500-amino-acid chain; its full sequence is Guanosine-5'-triphosphate,3'-diphosphate pyrophosphatase (500 aa).

Belongs to the GppA/Ppx family. GppA subfamily.

The catalysed reaction is guanosine 3'-diphosphate 5'-triphosphate + H2O = guanosine 3',5'-bis(diphosphate) + phosphate + H(+). It functions in the pathway purine metabolism; ppGpp biosynthesis; ppGpp from GTP: step 2/2. Functionally, catalyzes the conversion of pppGpp to ppGpp. Guanosine pentaphosphate (pppGpp) is a cytoplasmic signaling molecule which together with ppGpp controls the 'stringent response', an adaptive process that allows bacteria to respond to amino acid starvation, resulting in the coordinated regulation of numerous cellular activities. The polypeptide is Guanosine-5'-triphosphate,3'-diphosphate pyrophosphatase (Photorhabdus laumondii subsp. laumondii (strain DSM 15139 / CIP 105565 / TT01) (Photorhabdus luminescens subsp. laumondii)).